Here is a 291-residue protein sequence, read N- to C-terminus: Glycine--tRNA ligase alpha subunit (291 aa).

This sequence belongs to the class-II aminoacyl-tRNA synthetase family. As to quaternary structure, tetramer of two alpha and two beta subunits.

The protein localises to the cytoplasm. The catalysed reaction is tRNA(Gly) + glycine + ATP = glycyl-tRNA(Gly) + AMP + diphosphate. This is Glycine--tRNA ligase alpha subunit from Geotalea uraniireducens (strain Rf4) (Geobacter uraniireducens).